We begin with the raw amino-acid sequence, 382 residues long: Glutamate 5-kinase (382 aa).

Lys15 is a binding site for ATP. Substrate contacts are provided by Ser62, Asp149, and Asn161. An ATP-binding site is contributed by 181-182; sequence TD. The PUA domain occupies 288 to 366; sequence RGSVSVDAGA…VEIERLLGYS (79 aa).

The protein belongs to the glutamate 5-kinase family.

It localises to the cytoplasm. It carries out the reaction L-glutamate + ATP = L-glutamyl 5-phosphate + ADP. It participates in amino-acid biosynthesis; L-proline biosynthesis; L-glutamate 5-semialdehyde from L-glutamate: step 1/2. Catalyzes the transfer of a phosphate group to glutamate to form L-glutamate 5-phosphate. The sequence is that of Glutamate 5-kinase from Delftia acidovorans (strain DSM 14801 / SPH-1).